We begin with the raw amino-acid sequence, 172 residues long: Adenine phosphoribosyltransferase (172 aa).

It belongs to the purine/pyrimidine phosphoribosyltransferase family. Homodimer.

The protein localises to the cytoplasm. It carries out the reaction AMP + diphosphate = 5-phospho-alpha-D-ribose 1-diphosphate + adenine. It functions in the pathway purine metabolism; AMP biosynthesis via salvage pathway; AMP from adenine: step 1/1. Its function is as follows. Catalyzes a salvage reaction resulting in the formation of AMP, that is energically less costly than de novo synthesis. The protein is Adenine phosphoribosyltransferase of Malacoplasma penetrans (strain HF-2) (Mycoplasma penetrans).